Consider the following 230-residue polypeptide: RNA chaperone ProQ (230 aa).

The interval 106–181 (AKARVQAQRA…EERHTPVSDI (76 aa)) is disordered. Residues 146 to 155 (RRKDNAERKP) are compositionally biased toward basic and acidic residues. The segment covering 158 to 167 (AKPAAAAKPS) has biased composition (low complexity).

This sequence belongs to the ProQ family.

The protein resides in the cytoplasm. In terms of biological role, RNA chaperone with significant RNA binding, RNA strand exchange and RNA duplexing activities. May regulate ProP activity through an RNA-based, post-transcriptional mechanism. The chain is RNA chaperone ProQ from Cronobacter sakazakii (strain ATCC BAA-894) (Enterobacter sakazakii).